The primary structure comprises 363 residues: Probable L-tyrosine/L-aspartate decarboxylase (363 aa).

The residue at position 224 (K224) is an N6-(pyridoxal phosphate)lysine.

It belongs to the group II decarboxylase family. MfnA subfamily. Pyridoxal 5'-phosphate serves as cofactor.

The enzyme catalyses L-tyrosine + H(+) = tyramine + CO2. It catalyses the reaction L-aspartate + H(+) = beta-alanine + CO2. Its pathway is cofactor biosynthesis; methanofuran biosynthesis. It functions in the pathway cofactor biosynthesis; coenzyme A biosynthesis. Functionally, catalyzes the decarboxylation of L-tyrosine to produce tyramine for methanofuran biosynthesis. Can also catalyze the decarboxylation of L-aspartate to produce beta-alanine for coenzyme A (CoA) biosynthesis. This Methanosphaerula palustris (strain ATCC BAA-1556 / DSM 19958 / E1-9c) protein is Probable L-tyrosine/L-aspartate decarboxylase.